The chain runs to 288 residues: Intermediate transcription factor 3 small subunit (288 aa).

This sequence belongs to the orthopoxvirus OPG134 family. In terms of assembly, heterodimer of a 45 kDa (A23R) and a 32 kDa (A8R) subunit to form the virus intermediate transcription factor (VITF)-3.

In terms of biological role, acts with RNA polymerase to initiate transcription from intermediate gene promoters. This is Intermediate transcription factor 3 small subunit (OPG134) from Homo sapiens (Human).